Reading from the N-terminus, the 204-residue chain is MKVKICGITDVETAKSACEYGADALGFVFAESKRKITPKRAKEIIQELPANVLKIGVFVNESVEVIQKIADECGLTHVQLHGDEDNYQIRRLNILCIKSLGVTSERDMKNAQRYETDYILFDSPKEKFHGGNGKTFSWELLGHMPKELRKKTILAGGLNALNIEEAIRTVRPYMVDVSSGVETEGKKDVEKIKQFIIKAKECSK.

This sequence belongs to the TrpF family.

It catalyses the reaction N-(5-phospho-beta-D-ribosyl)anthranilate = 1-(2-carboxyphenylamino)-1-deoxy-D-ribulose 5-phosphate. Its pathway is amino-acid biosynthesis; L-tryptophan biosynthesis; L-tryptophan from chorismate: step 3/5. The polypeptide is N-(5'-phosphoribosyl)anthranilate isomerase (Bacillus cereus (strain B4264)).